The sequence spans 415 residues: Proline-serine-threonine phosphatase-interacting protein 1 (415 aa).

Positions 5 to 264 constitute an F-BAR domain; that stretch reads LQFRDAFWCR…TLEGCDVEGD (260 aa). Coiled-coil stretches lie at residues 94 to 133 and 162 to 215; these read LALA…KLSL and SANG…TCEA. Ser318 is modified (phosphoserine). Phosphotyrosine; by ABL1 is present on Tyr344. The 58-residue stretch at 358 to 415 folds into the SH3 domain; the sequence is SSAQDYRALYDYTAQNSDELDISAGDILAVILEGEDGWWTVERNGQRGFVPGSYLEKL.

As to quaternary structure, homodimer. Homotrimer. Interacts (via coiled-coil domain) with CD2AP, PTPN12 and PTPN18. Interacts (via SH3 domain) with ABL1 and WAS. Interacts (via SH3 and coiled-coil domains) with MEFV (via B-box zinc finger); the interaction allows binding of MEFV to PYCARD and facilitates formation of PYCARD pyroptosomes. Interacts with DNM2 and FASLG. Interacts with CD2. Dephosphorylated on Tyr-344 by PTPN18, this event negatively regulates the association of PSTPIP1 with SH2 domain-containing proteins as tyrosine kinase. Phosphorylation of Tyr-344 is probably required for subsequent phosphorylation at other tyrosine residues. Phosphorylation is induced by activation of the EGFR and PDGFR in a ABL1 dependent manner. The phosphorylation regulates the interaction with WAS and with MEFV. As to expression, highly expressed in adult lung and spleen, and weakly expressed in testis, muscle, kidney, brain and heart. Highly expressed in spleen and thymus, moderately in lung, brain and muscle, and weakly expressed in heart and liver (at protein level).

It localises to the cytoplasm. The protein localises to the perinuclear region. The protein resides in the cell projection. Its subcellular location is the lamellipodium. It is found in the cleavage furrow. It localises to the cytoskeleton. The protein localises to the cell membrane. The protein resides in the uropodium. Functionally, involved in regulation of the actin cytoskeleton. May regulate WAS actin-bundling activity. Bridges the interaction between ABL1 and PTPN18 leading to ABL1 dephosphorylation. May play a role as a scaffold protein between PTPN12 and WAS and allow PTPN12 to dephosphorylate WAS. Has the potential to physically couple CD2 and CD2AP to WAS. Acts downstream of CD2 and CD2AP to recruit WAS to the T-cell:APC contact site so as to promote the actin polymerization required for synapse induction during T-cell activation. Down-regulates CD2-stimulated adhesion through the coupling of PTPN12 to CD2. Also has a role in innate immunity and the inflammatory response. Recruited to inflammasomes by MEFV. Induces formation of pyroptosomes, large supramolecular structures composed of oligomerized PYCARD dimers which form prior to inflammatory apoptosis. Binding to MEFV allows MEFV to bind to PYCARD and facilitates pyroptosome formation. Regulates endocytosis and cell migration in neutrophils. This is Proline-serine-threonine phosphatase-interacting protein 1 (Pstpip1) from Mus musculus (Mouse).